The sequence spans 128 residues: Ribonuclease pancreatic (128 aa).

A disordered region spans residues 1–20 (KETAAMKFQRQHMDSGSSLS). Residues Lys7 and Arg10 each contribute to the substrate site. His12 functions as the Proton acceptor in the catalytic mechanism. Intrachain disulfides connect Cys26/Cys84, Cys40/Cys95, Cys58/Cys110, and Cys65/Cys72. Asn34 carries N-linked (GlcNAc...) asparagine glycosylation. Substrate contacts are provided by residues 41-45 (KPVNT), Lys66, and Arg85. The Proton donor role is filled by His119.

It belongs to the pancreatic ribonuclease family. Monomer. Interacts with and forms tight 1:1 complexes with RNH1. Dimerization of two such complexes may occur. Interaction with RNH1 inhibits this protein. In terms of tissue distribution, pancreas.

The protein resides in the secreted. It carries out the reaction an [RNA] containing cytidine + H2O = an [RNA]-3'-cytidine-3'-phosphate + a 5'-hydroxy-ribonucleotide-3'-[RNA].. The catalysed reaction is an [RNA] containing uridine + H2O = an [RNA]-3'-uridine-3'-phosphate + a 5'-hydroxy-ribonucleotide-3'-[RNA].. In terms of biological role, endonuclease that catalyzes the cleavage of RNA on the 3' side of pyrimidine nucleotides. Acts on single-stranded and double-stranded RNA. The protein is Ribonuclease pancreatic (RNASE1) of Choloepus hoffmanni (Hoffmann's two-fingered sloth).